Consider the following 566-residue polypeptide: DBIRD complex subunit ZNF326 (566 aa).

Disordered regions lie at residues 19-81 (HCGV…ESYD) and 145-180 (RPGFMEDRGRESYSSYSSFSSPHMKPAPVGSRGRGT). Positions 59–73 (SHGGGGGGGGGGGNR) are enriched in gly residues. Positions 156 to 165 (SYSSYSSFSS) are enriched in low complexity. Residues 240–263 (KRKMMPQPYNKPGGTFIKKPKMTK) carry the Bipartite nuclear localization signal motif. The disordered stretch occupies residues 314–347 (FGDSKGEGKSEEEEKRRIEARREKQRRRREKNSE). The segment covering 317 to 335 (SKGEGKSEEEEKRRIEARR) has biased composition (basic and acidic residues). 2 consecutive C2H2 AKAP95-type zinc fingers follow at residues 359–381 (CSFCKFRTFEEKEIESHLESAAH) and 452–475 (CSACSVYVPALHSSVQQHLKSPDH). The segment at 516–566 (PFEINDQAQEQQTEEEDKAEEPAEGEEEEEEEEEEETEEQTDFTLDHTEDN) is disordered. Residues 527–556 (QTEEEDKAEEPAEGEEEEEEEEEEETEEQT) show a composition bias toward acidic residues.

The protein belongs to the AKAP95 family. Component of the DBIRD complex.

The protein localises to the nucleus. Its function is as follows. Core component of the DBIRD complex, a multiprotein complex that acts at the interface between core mRNP particles and RNA polymerase II (RNAPII) and integrates transcript elongation with the regulation of alternative splicing. This Gallus gallus (Chicken) protein is DBIRD complex subunit ZNF326 (ZNF326).